A 479-amino-acid polypeptide reads, in one-letter code: Zinc metalloproteinase/disintegrin (479 aa).

The N-terminal stretch at Met-1 to Ser-20 is a signal peptide. The propeptide occupies Ile-21 to Val-187. The region spanning Arg-193–Pro-390 is the Peptidase M12B domain. Residues Glu-196 and Asp-280 each coordinate Ca(2+). Disulfide bonds link Cys-304–Cys-385, Cys-344–Cys-369, and Cys-346–Cys-352. Position 329 (His-329) interacts with Zn(2+). The active site involves Glu-330. The Zn(2+) site is built by His-333 and His-339. Residues Cys-385 and Asn-388 each coordinate Ca(2+). A propeptide spanning residues Pro-390–Arg-414 is cleaved from the precursor. The region spanning Thr-398–Ala-479 is the Disintegrin domain. Disulfide bonds link Cys-435–Cys-441, Cys-440–Cys-465, and Cys-453–Cys-472. Residues Arg-457–Asp-459 carry the Cell attachment site motif.

This sequence belongs to the venom metalloproteinase (M12B) family. P-II subfamily. P-IIa sub-subfamily. Monomer. Zn(2+) is required as a cofactor. In terms of tissue distribution, expressed by the venom gland.

It is found in the secreted. Functionally, snake venom metalloproteinase that impairs hemostasis in the envenomed animal. Its function is as follows. Inhibits platelet aggregation induced by ADP, thrombin, platelet-activating factor and collagen. Acts by inhibiting fibrinogen interaction with platelet receptors GPIIb/GPIIIa (ITGA2B/ITGB3). The chain is Zinc metalloproteinase/disintegrin from Deinagkistrodon acutus (Hundred-pace snake).